A 299-amino-acid polypeptide reads, in one-letter code: MLPSKPLVIVLIGPTASGKTELAIDIAKYFNIHIHNVDSRQIYRFMDIGTAKPTKVQQRAIKHFLIDVEDPSVKVNAKQFQEIATKSINRELNQKKTPFLVGGSGLYMNSIIKGFFAPDVPPQSFLRSQFEKLGQEKCWELLKVCDPELTKTINYADQIRTIRGLEVFYVTGKRMSSQRFQNPPPWRILELGINRVDLKERIFKRTKNMFEFGIIEETKNIINQYGSTLPLLETIGYKEAKNVIKENLTIEEAIELTTTKTIQFAKRQKTWFRNKNNAIWLNNKNLLKDAIIKIEYALG.

13–20 is an ATP binding site; it reads GPTASGKT. A substrate-binding site is contributed by 15-20; the sequence is TASGKT. Positions 38-41 are interaction with substrate tRNA; it reads DSRQ.

It belongs to the IPP transferase family. Monomer. The cofactor is Mg(2+).

The catalysed reaction is adenosine(37) in tRNA + dimethylallyl diphosphate = N(6)-dimethylallyladenosine(37) in tRNA + diphosphate. Catalyzes the transfer of a dimethylallyl group onto the adenine at position 37 in tRNAs that read codons beginning with uridine, leading to the formation of N6-(dimethylallyl)adenosine (i(6)A). This is tRNA dimethylallyltransferase from Prochlorococcus marinus (strain MIT 9515).